The primary structure comprises 217 residues: Protein MODIFYING WALL LIGNIN-2 (217 aa).

A signal peptide spans 1–23 (MHNLFLYSVVFSLGLVSFITCFA). At 24–51 (AEFKRTQKEDIRWDTERNCYVPGSHAFG) the chain is on the cytoplasmic side. A helical transmembrane segment spans residues 52 to 72 (LGSAAVLCFCLAQIVGNIVVF). The Extracellular segment spans residues 73–94 (RNHRTRTKREDGYKITDLTLPT). A helical membrane pass occupies residues 95 to 115 (VLLLLSWSNFVVVVLILSTAI). The Cytoplasmic segment spans residues 116–137 (SMSRAQAYGEGWLDEDCYLVKD). A helical membrane pass occupies residues 138-158 (GVFAASGCLAILGLGALTISA). At 159-217 (TRIKVKKQQQLVQVVIKDQNQDQRRSMEEEQKHDEHQTNKSESVIHLVEEVSSTNISRI) the chain is on the extracellular side. N197 and N213 each carry an N-linked (GlcNAc...) asparagine glycan.

It belongs to the DESIGUAL family.

It localises to the cell membrane. Together with MWL1, contributes to secondary cell wall biology, specifically lignin biosynthesis. This chain is Protein MODIFYING WALL LIGNIN-2, found in Arabidopsis thaliana (Mouse-ear cress).